Here is a 498-residue protein sequence, read N- to C-terminus: uncharacterized protein (498 aa).

Transmembrane regions (helical) follow at residues 54–74, 100–120, 128–148, 150–170, 188–208, 221–241, 302–322, 326–346, 353–373, 381–401, and 446–466; these read LLKM…MAFL, VAVS…VVLV, MLAF…FMSS, GGLI…FPAL, SYLF…AYAL, WIYI…LFAL, VLYG…FVGL, YMTI…AWLS, AVYL…MLAS, TATY…LGWL, and AFTL…FFSL.

The protein belongs to the major facilitator superfamily. Allantoate permease family.

It is found in the membrane. This is an uncharacterized protein from Schizosaccharomyces pombe (strain 972 / ATCC 24843) (Fission yeast).